The following is a 760-amino-acid chain: Xaa-Pro dipeptidyl-peptidase (760 aa).

Active-site charge relay system residues include serine 349, aspartate 469, and histidine 499.

Belongs to the peptidase S15 family. Homodimer.

The protein resides in the cytoplasm. The catalysed reaction is Hydrolyzes Xaa-Pro-|- bonds to release unblocked, N-terminal dipeptides from substrates including Ala-Pro-|-p-nitroanilide and (sequentially) Tyr-Pro-|-Phe-Pro-|-Gly-Pro-|-Ile.. Removes N-terminal dipeptides sequentially from polypeptides having unsubstituted N-termini provided that the penultimate residue is proline. In Streptococcus pyogenes serotype M5 (strain Manfredo), this protein is Xaa-Pro dipeptidyl-peptidase.